The chain runs to 79 residues: Quinohemoprotein amine dehydrogenase subunit gamma (79 aa).

The 4-cysteinyl-glutamic acid (Cys-Glu) cross-link spans cysteine 7–glutamate 16. Cross-links (3-cysteinyl-aspartic acid (Cys-Asp)) lie at residues cysteine 27–aspartate 33 and cysteine 41–aspartate 49. The active-site Proton acceptor is aspartate 33. A cross-link (4'-cysteinyl-tryptophylquinone (Cys-Trp)) is located at residues cysteine 37 to tryptophan 43. Position 43 is a tryptophylquinone (tryptophan 43).

It belongs to the quinohemoprotein amine dehydrogenase subunit gamma family. Heterotrimer of an alpha, a beta and a gamma subunit. Cysteine tryptophylquinone residue is required as a cofactor. The cysteine tryptophylquinone (CTQ) is generated by oxidation of the indole ring of a tryptophan residue to form tryptophylquinone, followed by covalent cross-linking with a cysteine residue.

Its subcellular location is the periplasm. The enzyme catalyses an aliphatic amine + A + H2O = an aldehyde + AH2 + NH4(+). Its function is as follows. Catalyzes the oxidative deamination of a wide range of aliphatic monoamines and diamines. The physiological electron acceptor is an azurin-like blue protein. The chain is Quinohemoprotein amine dehydrogenase subunit gamma (qhnDH) from Pseudomonas putida (strain ATCC 47054 / DSM 6125 / CFBP 8728 / NCIMB 11950 / KT2440).